A 750-amino-acid chain; its full sequence is Penicillin-binding protein 2x (750 aa).

A helical transmembrane segment spans residues Leu29 to Gly49. Ser337 acts as the Acyl-ester intermediate in catalysis. PASTA domains follow at residues Gln632 to Asp691 and Lys692 to Asp750.

It belongs to the transpeptidase family.

The protein localises to the cell membrane. Functionally, a transpeptidase that forms peptide cross-links between adjacent glycan strands in cell wall peptidoglycan (PG). Part of the divisome machinery that synthesizes the septal cross wall. Beta-lactams inactivate the PBPs by acylating an essential serine residue in the active site of these proteins. This Streptococcus pneumoniae serotype 4 (strain ATCC BAA-334 / TIGR4) protein is Penicillin-binding protein 2x (pbpX).